A 302-amino-acid polypeptide reads, in one-letter code: Glycine--tRNA ligase alpha subunit (302 aa).

This sequence belongs to the class-II aminoacyl-tRNA synthetase family. As to quaternary structure, tetramer of two alpha and two beta subunits.

The protein resides in the cytoplasm. It catalyses the reaction tRNA(Gly) + glycine + ATP = glycyl-tRNA(Gly) + AMP + diphosphate. This is Glycine--tRNA ligase alpha subunit from Psychromonas ingrahamii (strain DSM 17664 / CCUG 51855 / 37).